The sequence spans 176 residues: Inner membrane-spanning protein YciB (176 aa).

5 helical membrane-spanning segments follow: residues 22 to 42 (IYYASGALIVASALVLVYTWL), 50 to 70 (VALITFVLVAIFGSLTLYYHN), 81 to 101 (IYSLFAAALLISQFVFGKPLI), 121 to 141 (IAWALFFLACGAANIYIAFWL), and 149 to 169 (FKVFGLTGLTLVFTLLSGIYI).

This sequence belongs to the YciB family.

The protein resides in the cell inner membrane. Its function is as follows. Plays a role in cell envelope biogenesis, maintenance of cell envelope integrity and membrane homeostasis. The chain is Inner membrane-spanning protein YciB from Sodalis glossinidius (strain morsitans).